A 256-amino-acid chain; its full sequence is tRNA-cytidine(32) 2-sulfurtransferase (256 aa).

The PP-loop motif signature appears at 35-40 (SGGKDS). C110, C113, and C201 together coordinate [4Fe-4S] cluster.

This sequence belongs to the TtcA family. Homodimer. Mg(2+) serves as cofactor. Requires [4Fe-4S] cluster as cofactor.

The protein resides in the cytoplasm. It carries out the reaction cytidine(32) in tRNA + S-sulfanyl-L-cysteinyl-[cysteine desulfurase] + AH2 + ATP = 2-thiocytidine(32) in tRNA + L-cysteinyl-[cysteine desulfurase] + A + AMP + diphosphate + H(+). It participates in tRNA modification. Functionally, catalyzes the ATP-dependent 2-thiolation of cytidine in position 32 of tRNA, to form 2-thiocytidine (s(2)C32). The sulfur atoms are provided by the cysteine/cysteine desulfurase (IscS) system. The sequence is that of tRNA-cytidine(32) 2-sulfurtransferase from Coxiella burnetii (strain CbuG_Q212) (Coxiella burnetii (strain Q212)).